The primary structure comprises 138 residues: NADH dehydrogenase [ubiquinone] 1 alpha subcomplex subunit N7BM (138 aa).

This sequence belongs to the complex I NDUFA12 subunit family. In terms of assembly, complex I is composed of 42 different subunits.

The protein localises to the mitochondrion inner membrane. Accessory subunit of the mitochondrial membrane respiratory chain NADH dehydrogenase (Complex I), that is believed not to be involved in catalysis. Complex I functions in the transfer of electrons from NADH to the respiratory chain. The immediate electron acceptor for the enzyme is believed to be ubiquinone. In Yarrowia lipolytica (strain CLIB 122 / E 150) (Yeast), this protein is NADH dehydrogenase [ubiquinone] 1 alpha subcomplex subunit N7BM.